The sequence spans 283 residues: MQLRRKLARAMGRAITDFDMIADGDRILCAVSGGKDSYAMHALLVDLARRAPVRFSVIAVNIDQGHPGYPGHLLTDYMAAGGHEFRMISEDTYSIVTEKIPENKTYCSLCSRLRRGILYRIARELGCSKIALGHHRDDAVTTLLLNLIFAGQLKSMPPKLISDDGDNIVIRPLIYCAEAELAAFAAEERFPIIPCDLCGSQENLQRKAVSQLLADLDARHPGTRQNMLAALGNVRPSHLFDTGLWKRLGLEVAREEGSARDEAGVGAPAPDVLPVGNLLRNLA.

The PP-loop motif signature appears at 32–37; it reads SGGKDS. Positions 107, 110, and 198 each coordinate [4Fe-4S] cluster.

This sequence belongs to the TtcA family. As to quaternary structure, homodimer. Mg(2+) serves as cofactor. It depends on [4Fe-4S] cluster as a cofactor.

It is found in the cytoplasm. It carries out the reaction cytidine(32) in tRNA + S-sulfanyl-L-cysteinyl-[cysteine desulfurase] + AH2 + ATP = 2-thiocytidine(32) in tRNA + L-cysteinyl-[cysteine desulfurase] + A + AMP + diphosphate + H(+). It participates in tRNA modification. Catalyzes the ATP-dependent 2-thiolation of cytidine in position 32 of tRNA, to form 2-thiocytidine (s(2)C32). The sulfur atoms are provided by the cysteine/cysteine desulfurase (IscS) system. This is tRNA-cytidine(32) 2-sulfurtransferase from Sorangium cellulosum (strain So ce56) (Polyangium cellulosum (strain So ce56)).